A 645-amino-acid polypeptide reads, in one-letter code: ATP-dependent zinc metalloprotease FtsH 1 (645 aa).

The Cytoplasmic portion of the chain corresponds to 1-6; it reads MRSTQK. Residues 7–27 traverse the membrane as a helical segment; the sequence is TLALWFFLIIMAVFLFQAYES. Over 28-110 the chain is Periplasmic; it reads KQQKAIADFN…NYERADNGGF (83 aa). The chain crosses the membrane as a helical span at residues 111–131; sequence FQSLLVNWLPLILIVAMFLFI. At 132-645 the chain is on the cytoplasmic side; it reads MRQIQAGGGK…PVGNTGPVTI (514 aa). 203 to 210 provides a ligand contact to ATP; it reads GSPGTGKT. Residue H425 participates in Zn(2+) binding. E426 is an active-site residue. H429 and D501 together coordinate Zn(2+).

The protein in the central section; belongs to the AAA ATPase family. It in the C-terminal section; belongs to the peptidase M41 family. As to quaternary structure, homohexamer. The cofactor is Zn(2+).

It is found in the cell inner membrane. Functionally, acts as a processive, ATP-dependent zinc metallopeptidase for both cytoplasmic and membrane proteins. Plays a role in the quality control of integral membrane proteins. The protein is ATP-dependent zinc metalloprotease FtsH 1 of Bdellovibrio bacteriovorus (strain ATCC 15356 / DSM 50701 / NCIMB 9529 / HD100).